A 276-amino-acid polypeptide reads, in one-letter code: Potassium/proton antiporter CemA (276 aa).

A run of 3 helical transmembrane segments spans residues 59–79 (LLLL…WIFG), 199–219 (FFII…GWEV), and 236–256 (FIFL…KYWI).

This sequence belongs to the CemA family.

Its subcellular location is the plastid. The protein localises to the chloroplast inner membrane. The catalysed reaction is K(+)(in) + H(+)(out) = K(+)(out) + H(+)(in). Contributes to K(+)/H(+) antiport activity by supporting proton efflux to control proton extrusion and homeostasis in chloroplasts in a light-dependent manner to modulate photosynthesis. Prevents excessive induction of non-photochemical quenching (NPQ) under continuous-light conditions. Indirectly promotes efficient inorganic carbon uptake into chloroplasts. This chain is Potassium/proton antiporter CemA, found in Cyanidioschyzon merolae (strain NIES-3377 / 10D) (Unicellular red alga).